A 321-amino-acid chain; its full sequence is ATP-dependent 6-phosphofructokinase (321 aa).

Gly-11 serves as a coordination point for ATP. Residue 21-25 (RAVVR) coordinates ADP. Residues 72–73 (RC) and 102–105 (GDGS) contribute to the ATP site. Asp-103 is a Mg(2+) binding site. 126–128 (TID) lines the substrate pocket. Asp-128 (proton acceptor) is an active-site residue. Arg-155 is an ADP binding site. Residues Arg-163 and 170 to 172 (MGR) each bind substrate. ADP is bound by residues 186 to 188 (GAE), Arg-212, and 214 to 216 (KLH). Residues Glu-223, Arg-245, and 251 to 254 (HIQR) contribute to the substrate site.

The protein belongs to the phosphofructokinase type A (PFKA) family. ATP-dependent PFK group I subfamily. Prokaryotic clade 'B1' sub-subfamily. Homotetramer. Requires Mg(2+) as cofactor.

It localises to the cytoplasm. The catalysed reaction is beta-D-fructose 6-phosphate + ATP = beta-D-fructose 1,6-bisphosphate + ADP + H(+). It functions in the pathway carbohydrate degradation; glycolysis; D-glyceraldehyde 3-phosphate and glycerone phosphate from D-glucose: step 3/4. Allosterically activated by ADP and other diphosphonucleosides, and allosterically inhibited by phosphoenolpyruvate. Functionally, catalyzes the phosphorylation of D-fructose 6-phosphate to fructose 1,6-bisphosphate by ATP, the first committing step of glycolysis. The protein is ATP-dependent 6-phosphofructokinase of Caldanaerobacter subterraneus subsp. tengcongensis (strain DSM 15242 / JCM 11007 / NBRC 100824 / MB4) (Thermoanaerobacter tengcongensis).